The chain runs to 926 residues: Protein O-mannosyl-transferase Tmtc3 (926 aa).

Residues 1–26 (MSTNPNPGIHQYAPSTLPREREREGA) are disordered. Over 1–36 (MSTNPNPGIHQYAPSTLPREREREGATNSPQRNLLE) the chain is Cytoplasmic. A helical membrane pass occupies residues 37 to 57 (FLCICVACIVCYYNSTQCGLV). Over 58-114 (FDDISAIRDNKDLRPHTPLINVFLNDFWGTPMRKEQSHKSYRPLTVLTFRFNYLLHA) the chain is Extracellular. Residues 115-135 (LEPFGYHLVNLLLHLSVCLLW) form a helical membrane-spanning segment. Topologically, residues 136–169 (RRVCRLLLRQCAASGSNAISAPSSSSVSQLNTCA) are cytoplasmic. The chain crosses the membrane as a helical span at residues 170–190 (FVASLLFAVHPVHTEAVTGVV). Residues 191-192 (GR) lie on the Extracellular side of the membrane. A helical membrane pass occupies residues 193-213 (AELLSSICFLAAFLSYAKSVG). The Cytoplasmic segment spans residues 214-222 (DSGCPRRTN). Transmembrane regions (helical) follow at residues 223–239 (WLTL…ASML) and 240–259 (CKEQ…LFVV). Over 260–303 (HQLRPLHLCHFVLRLFDERTEQQSPKLANPSGIRRWSSSTLWKR) the chain is Cytoplasmic. Residues 304-324 (LSFLVGITLTLLVGRVYVMGS) traverse the membrane as a helical segment. The Extracellular portion of the chain corresponds to 325-345 (QLPIFTRFDNPASAADTPERQ). The helical transmembrane segment at 346–366 (LTYGYLIYLNCWLLLCPSLLC) threads the bilayer. The Cytoplasmic portion of the chain corresponds to 367–384 (CDWTMGTVPLLQGFTDSR). Residues 385 to 405 (NITTLLTFLALGAMVAKTCFT) traverse the membrane as a helical segment. The Extracellular segment spans residues 406–419 (RNLALSRTLIMCLG). The chain crosses the membrane as a helical span at residues 420-440 (WMVLPFLPASNLFFPVGFVVA). Over 441 to 442 (ER) the chain is Cytoplasmic. The chain crosses the membrane as a helical span at residues 443–463 (ILYMPSMGYCLLVAYGFEQLQ). Residues 464-926 (RRGSLSWQRF…RPTHKSRKRS (463 aa)) are Extracellular-facing. 9 TPR repeats span residues 514–547 (AKLY…QTDD), 548–581 (IGAH…FPQA), 596–630 (LNVF…RSDY), 631–664 (VQAY…DNEN), 665–698 (ADIY…YPEH), 736–769 (EKVY…KADF), 770–803 (RSAL…HPSH), 805–838 (KGLI…DPHN), and 839–872 (TQGL…APAE). Residues asparagine 609 and asparagine 645 are each glycosylated (N-linked (GlcNAc...) asparagine).

This sequence belongs to the TMTC family.

Its subcellular location is the membrane. The protein localises to the endoplasmic reticulum. The catalysed reaction is a di-trans,poly-cis-dolichyl beta-D-mannosyl phosphate + L-seryl-[protein] = 3-O-(alpha-D-mannosyl)-L-seryl-[protein] + a di-trans,poly-cis-dolichyl phosphate + H(+). It catalyses the reaction a di-trans,poly-cis-dolichyl beta-D-mannosyl phosphate + L-threonyl-[protein] = 3-O-(alpha-D-mannosyl)-L-threonyl-[protein] + a di-trans,poly-cis-dolichyl phosphate + H(+). It functions in the pathway protein modification; protein glycosylation. Its function is as follows. Transfers mannosyl residues to the hydroxyl group of serine or threonine residues. The protein is Protein O-mannosyl-transferase Tmtc3 of Drosophila melanogaster (Fruit fly).